A 302-amino-acid polypeptide reads, in one-letter code: N-acetylmuramic acid 6-phosphate etherase (302 aa).

In terms of domain architecture, SIS spans 57–220 (VSEKLKNNGR…TTAVMIKLGK (164 aa)). The active-site Proton donor is the glutamate 85. Residue glutamate 116 is part of the active site.

This sequence belongs to the GCKR-like family. MurNAc-6-P etherase subfamily. As to quaternary structure, homodimer.

It catalyses the reaction N-acetyl-D-muramate 6-phosphate + H2O = N-acetyl-D-glucosamine 6-phosphate + (R)-lactate. It functions in the pathway amino-sugar metabolism; N-acetylmuramate degradation. Its function is as follows. Specifically catalyzes the cleavage of the D-lactyl ether substituent of MurNAc 6-phosphate, producing GlcNAc 6-phosphate and D-lactate. This chain is N-acetylmuramic acid 6-phosphate etherase, found in Clostridium acetobutylicum (strain ATCC 824 / DSM 792 / JCM 1419 / IAM 19013 / LMG 5710 / NBRC 13948 / NRRL B-527 / VKM B-1787 / 2291 / W).